The following is a 269-amino-acid chain: Lysyl endopeptidase (269 aa).

3 cysteine pairs are disulfide-bonded: C6–C216, C12–C80, and C36–C58. Catalysis depends on charge relay system residues H57, D113, and S194.

The protein belongs to the peptidase S1 family.

It is found in the secreted. The catalysed reaction is Preferential cleavage: Lys-|-Xaa, including Lys-|-Pro.. In terms of biological role, highly specific endopeptidase that hydrolyzes lysyl bonds including the Lys-Pro bond. The sequence is that of Lysyl endopeptidase from Lysobacter enzymogenes.